We begin with the raw amino-acid sequence, 247 residues long: Pulmonary surfactant-associated protein A (247 aa).

Positions Met1 to Ala15 are cleaved as a signal peptide. The region spanning Gly27–Pro99 is the Collagen-like domain. 9 positions are modified to 4-hydroxyproline: Pro29, Pro32, Pro35, Pro41, Pro53, Pro56, Pro62, Pro66, and Pro69. The interval Gly30–Ala100 is disordered. Residues Pro41–Lys50 are compositionally biased toward basic and acidic residues. Pro residues predominate over residues Pro53 to Gly64. Residues Glu83–Glu92 show a composition bias toward basic and acidic residues. A C-type lectin domain is found at Ala132–Phe247. Cystine bridges form between Cys154–Cys245 and Cys223–Cys237. Asn206 carries N-linked (GlcNAc...) asparagine glycosylation. Ca(2+) is bound by residues Glu214, Arg216, Asn233, and Asp234.

This sequence belongs to the SFTPA family. Oligomeric complex of 6 set of homotrimers.

The protein resides in the secreted. Its subcellular location is the extracellular space. It is found in the extracellular matrix. It localises to the surface film. Functionally, in presence of calcium ions, it binds to surfactant phospholipids and contributes to lower the surface tension at the air-liquid interface in the alveoli of the mammalian lung and is essential for normal respiration. Enhances the expression of MYO18A/SP-R210 on alveolar macrophages. This is Pulmonary surfactant-associated protein A (SFTPA1) from Oryctolagus cuniculus (Rabbit).